The primary structure comprises 77 residues: Large ribosomal subunit protein bL28 (77 aa).

This sequence belongs to the bacterial ribosomal protein bL28 family.

The protein is Large ribosomal subunit protein bL28 of Polynucleobacter necessarius subsp. necessarius (strain STIR1).